The following is a 603-amino-acid chain: Polypeptide N-acetylgalactosaminyltransferase 10 (603 aa).

Residues 1–11 (MRRKEKRLLQA) are Cytoplasmic-facing. The chain crosses the membrane as a helical; Signal-anchor for type II membrane protein span at residues 12–31 (VALVLAALVLLPNVGLWALY). Topologically, residues 32–603 (RERQPDGTPG…STVLEKFNRN (572 aa)) are lumenal. Positions 38–59 (GTPGGSGAAVAPAAGQGSHSRQ) are disordered. Positions 45-55 (AAVAPAAGQGS) are enriched in low complexity. 2 N-linked (GlcNAc...) asparagine glycosylation sites follow: N124 and N146. 5 disulfides stabilise this stretch: C135-C365, C356-C432, C471-C488, C523-C538, and C563-C578. The catalytic subdomain A stretch occupies residues 144–253 (LPNTSIIIPF…VNWLPPLLDR (110 aa)). Residues H154, E156, D185, and R214 each contribute to the substrate site. D237 contacts Mn(2+). Position 238 (S238) interacts with substrate. H239 contacts Mn(2+). Positions 311 to 373 (PFESPVMAGG…PCSRVGHIYR (63 aa)) are catalytic subdomain B. W342 serves as a coordination point for substrate. H370 is a binding site for Mn(2+). Positions 373 and 378 each coordinate substrate. The segment at 373 to 384 (RKYVPYKVPAGV) is flexible loop. Positions 458–590 (AAWGEIRNVG…SSLTQQWLFE (133 aa)) constitute a Ricin B-type lectin domain. A glycan (N-linked (GlcNAc...) asparagine) is linked at N593.

Belongs to the glycosyltransferase 2 family. GalNAc-T subfamily. It depends on Mn(2+) as a cofactor. In terms of tissue distribution, widely expressed. Expressed at high level in small intestine, and at intermediate levels in stomach, pancreas, ovary, thyroid gland and spleen. Weakly expressed in other tissues.

It is found in the golgi apparatus membrane. The catalysed reaction is L-seryl-[protein] + UDP-N-acetyl-alpha-D-galactosamine = a 3-O-[N-acetyl-alpha-D-galactosaminyl]-L-seryl-[protein] + UDP + H(+). The enzyme catalyses L-threonyl-[protein] + UDP-N-acetyl-alpha-D-galactosamine = a 3-O-[N-acetyl-alpha-D-galactosaminyl]-L-threonyl-[protein] + UDP + H(+). It participates in protein modification; protein glycosylation. Its function is as follows. Catalyzes the initial reaction in O-linked oligosaccharide biosynthesis, the transfer of an N-acetyl-D-galactosamine residue to a serine or threonine residue on the protein receptor. Has activity toward Muc5Ac and EA2 peptide substrates. This is Polypeptide N-acetylgalactosaminyltransferase 10 (GALNT10) from Homo sapiens (Human).